We begin with the raw amino-acid sequence, 204 residues long: Methylthioribulose-1-phosphate dehydratase (204 aa).

Positions 94 and 96 each coordinate Zn(2+).

It belongs to the aldolase class II family. MtnB subfamily. Requires Zn(2+) as cofactor.

The enzyme catalyses 5-(methylsulfanyl)-D-ribulose 1-phosphate = 5-methylsulfanyl-2,3-dioxopentyl phosphate + H2O. It functions in the pathway amino-acid biosynthesis; L-methionine biosynthesis via salvage pathway; L-methionine from S-methyl-5-thio-alpha-D-ribose 1-phosphate: step 2/6. Catalyzes the dehydration of methylthioribulose-1-phosphate (MTRu-1-P) into 2,3-diketo-5-methylthiopentyl-1-phosphate (DK-MTP-1-P). The chain is Methylthioribulose-1-phosphate dehydratase from Cronobacter sakazakii (strain ATCC BAA-894) (Enterobacter sakazakii).